The chain runs to 417 residues: NADH-quinone oxidoreductase subunit D (417 aa).

This sequence belongs to the complex I 49 kDa subunit family. NDH-1 is composed of 14 different subunits. Subunits NuoB, C, D, E, F, and G constitute the peripheral sector of the complex.

It localises to the cell inner membrane. The catalysed reaction is a quinone + NADH + 5 H(+)(in) = a quinol + NAD(+) + 4 H(+)(out). NDH-1 shuttles electrons from NADH, via FMN and iron-sulfur (Fe-S) centers, to quinones in the respiratory chain. The immediate electron acceptor for the enzyme in this species is believed to be ubiquinone. Couples the redox reaction to proton translocation (for every two electrons transferred, four hydrogen ions are translocated across the cytoplasmic membrane), and thus conserves the redox energy in a proton gradient. The protein is NADH-quinone oxidoreductase subunit D of Dechloromonas aromatica (strain RCB).